A 1602-amino-acid chain; its full sequence is Calmodulin-regulated spectrin-associated protein 1 (1602 aa).

Residues 216 to 331 (ESPAHQKVRY…FIAELFWWFE (116 aa)) form the Calponin-homology (CH) domain. Residues Ser-217, Ser-371, Ser-375, Ser-416, and Ser-431 each carry the phosphoserine modification. The disordered stretch occupies residues 426–471 (QKQQKSIQGEDIPDQRHRSNSLTRVDGQPRGAAIAWPEKKTRPASQ). Thr-512 is subject to Phosphothreonine. Ser-563, Ser-575, and Ser-589 each carry phosphoserine. Residues 603-620 (AKEKQVITKEDERGEGRP) are compositionally biased toward basic and acidic residues. Residues 603–637 (AKEKQVITKEDERGEGRPRSIVSRRPSEGPQPLVR) form a disordered region. Phosphoserine is present on residues Ser-629, Ser-722, Ser-728, Ser-738, and Ser-740. A compositionally biased stretch (basic and acidic residues) spans 772 to 789 (KLQEDMKVKEHEDKDDAS). Disordered regions lie at residues 772–808 (KLQE…VSMA) and 825–870 (LNSC…GKDP). Low complexity-rich tracts occupy residues 797–808 (STASQMSSVSMA) and 830–841 (TKSSTSSSQKTT). Positions 857–869 (QKREQSPSQHGKD) are enriched in basic and acidic residues. Residues 871–892 (ASLLASELVQLHMQLEEKRRAI) form a sufficient for interaction with SPTBN1 region. Coiled-coil stretches lie at residues 873–909 (LLAS…QRLK) and 1016–1048 (DVNE…QEQL). The interval 903–922 (SARQRLKLGKAAFLHVVKKG) is sufficient for interaction with calmodulin. Disordered stretches follow at residues 1075 to 1165 (FVEP…GKCL), 1206 to 1226 (KEVG…VEEP), and 1301 to 1448 (ARVR…DWET). Residue Ser-1080 is modified to Phosphoserine. Basic and acidic residues predominate over residues 1103–1114 (RPAELKVPKDRP). Polar residues predominate over residues 1115–1127 (QGSSRSKTPTPSV). A compositionally biased stretch (low complexity) spans 1206-1220 (KEVGSSSSDVSGKES). A coiled-coil region spans residues 1291 to 1343 (LLKQQRKAEEARVRKQQLEAEVELKRDEARRKAEEDRVRKEEEKARRELIKQE). The segment covering 1301–1346 (ARVRKQQLEAEVELKRDEARRKAEEDRVRKEEEKARRELIKQEYLR) has biased composition (basic and acidic residues). Residues 1361–1372 (PKSKPKKPRPKS) show a composition bias toward basic residues. Residues 1380–1392 (SDSGTKCSSTPDN) are compositionally biased toward polar residues. The segment covering 1393 to 1410 (LSRTQSGSSLSLASAATT) has biased composition (low complexity). A phosphoserine mark is found at Ser-1398 and Ser-1427. Residues 1463–1597 (GPKLFKEPSS…QPKRPAVPKK (135 aa)) enclose the CKK domain. Residue Tyr-1537 is modified to Phosphotyrosine.

This sequence belongs to the CAMSAP1 family. Interacts with spectrin via SPTBN1; the interaction is direct. Interacts with calmodulin; calcium-dependent it prevents interaction with spectrin.

The protein resides in the cytoplasm. The protein localises to the cytoskeleton. In terms of biological role, key microtubule-organizing protein that specifically binds the minus-end of non-centrosomal microtubules and regulates their dynamics and organization. Specifically recognizes growing microtubule minus-ends and stabilizes microtubules. Acts on free microtubule minus-ends that are not capped by microtubule-nucleating proteins or other factors and protects microtubule minus-ends from depolymerization. In contrast to CAMSAP2 and CAMSAP3, tracks along the growing tips of minus-end microtubules without significantly affecting the polymerization rate: binds at the very tip of the microtubules minus-end and acts as a minus-end tracking protein (-TIP) that dissociates from microtubules after allowing tubulin incorporation. Through interaction with spectrin may regulate neurite outgrowth. In Homo sapiens (Human), this protein is Calmodulin-regulated spectrin-associated protein 1 (CAMSAP1).